An 88-amino-acid polypeptide reads, in one-letter code: Small ribosomal subunit protein bS16c (88 aa).

The protein belongs to the bacterial ribosomal protein bS16 family.

Its subcellular location is the plastid. It is found in the chloroplast. The sequence is that of Small ribosomal subunit protein bS16c from Gossypium hirsutum (Upland cotton).